Here is a 200-residue protein sequence, read N- to C-terminus: Small ribosomal subunit protein eS8B (200 aa).

The segment at 1–41 (MGITRDSRHKRSATGAKRAQYRKKRKFELGRQPSNTRIGPK) is disordered. A phosphoserine mark is found at Ser-62 and Ser-99. Positions 124 to 145 (KGKKATATPTPKSKHVQRKHSA) are disordered. The span at 135–145 (KSKHVQRKHSA) shows a compositional bias: basic residues. Ser-150, Ser-154, and Ser-171 each carry phosphoserine.

The protein belongs to the eukaryotic ribosomal protein eS8 family. As to quaternary structure, component of the small ribosomal subunit (SSU). Mature yeast ribosomes consist of a small (40S) and a large (60S) subunit. The 40S small subunit contains 1 molecule of ribosomal RNA (18S rRNA) and at least 33 different proteins. The large 60S subunit contains 3 rRNA molecules (25S, 5.8S and 5S rRNA) and at least 46 different proteins.

The protein localises to the cytoplasm. In terms of biological role, component of the ribosome, a large ribonucleoprotein complex responsible for the synthesis of proteins in the cell. The small ribosomal subunit (SSU) binds messenger RNAs (mRNAs) and translates the encoded message by selecting cognate aminoacyl-transfer RNA (tRNA) molecules. The large subunit (LSU) contains the ribosomal catalytic site termed the peptidyl transferase center (PTC), which catalyzes the formation of peptide bonds, thereby polymerizing the amino acids delivered by tRNAs into a polypeptide chain. The nascent polypeptides leave the ribosome through a tunnel in the LSU and interact with protein factors that function in enzymatic processing, targeting, and the membrane insertion of nascent chains at the exit of the ribosomal tunnel. The protein is Small ribosomal subunit protein eS8B (rps802) of Schizosaccharomyces pombe (strain 972 / ATCC 24843) (Fission yeast).